Reading from the N-terminus, the 81-residue chain is MMFPLARNALSSLKIQSILQSMARHSHVKHSPDFHDKYGNAVLASGTAFCVATWVFTATQIGIEWNLSPVGRVTPKEWKHQ.

Residues 1–25 constitute a mitochondrion transit peptide; it reads MMFPLARNALSSLKIQSILQSMARH. Over 26–33 the chain is Mitochondrial matrix; sequence SHVKHSPD. The helical transmembrane segment at 34-60 threads the bilayer; it reads FHDKYGNAVLASGTAFCVATWVFTATQ. Residues 61–81 lie on the Mitochondrial intermembrane side of the membrane; it reads IGIEWNLSPVGRVTPKEWKHQ.

The protein belongs to the cytochrome c oxidase VIIb family. Component of the cytochrome c oxidase (complex IV, CIV), a multisubunit enzyme composed of 14 subunits. The complex is composed of a catalytic core of 3 subunits MT-CO1, MT-CO2 and MT-CO3, encoded in the mitochondrial DNA, and 11 supernumerary subunits COX4I, COX5A, COX5B, COX6A, COX6B, COX6C, COX7A, COX7B, COX7C, COX8 and NDUFA4, which are encoded in the nuclear genome. The complex exists as a monomer or a dimer and forms supercomplexes (SCs) in the inner mitochondrial membrane with NADH-ubiquinone oxidoreductase (complex I, CI) and ubiquinol-cytochrome c oxidoreductase (cytochrome b-c1 complex, complex III, CIII), resulting in different assemblies (supercomplex SCI(1)III(2)IV(1) and megacomplex MCI(2)III(2)IV(2)).

The protein localises to the mitochondrion inner membrane. The protein operates within energy metabolism; oxidative phosphorylation. Its function is as follows. Component of the cytochrome c oxidase, the last enzyme in the mitochondrial electron transport chain which drives oxidative phosphorylation. The respiratory chain contains 3 multisubunit complexes succinate dehydrogenase (complex II, CII), ubiquinol-cytochrome c oxidoreductase (cytochrome b-c1 complex, complex III, CIII) and cytochrome c oxidase (complex IV, CIV), that cooperate to transfer electrons derived from NADH and succinate to molecular oxygen, creating an electrochemical gradient over the inner membrane that drives transmembrane transport and the ATP synthase. Cytochrome c oxidase is the component of the respiratory chain that catalyzes the reduction of oxygen to water. Electrons originating from reduced cytochrome c in the intermembrane space (IMS) are transferred via the dinuclear copper A center (CU(A)) of subunit 2 and heme A of subunit 1 to the active site in subunit 1, a binuclear center (BNC) formed by heme A3 and copper B (CU(B)). The BNC reduces molecular oxygen to 2 water molecules using 4 electrons from cytochrome c in the IMS and 4 protons from the mitochondrial matrix. In Homo sapiens (Human), this protein is Cytochrome c oxidase subunit 7B2, mitochondrial (COX7B2).